We begin with the raw amino-acid sequence, 258 residues long: 4-hydroxy-tetrahydrodipicolinate reductase (258 aa).

NAD(+)-binding positions include 8-13 (GVTGRM), 93-95 (GTT), and 117-120 (AANF). His149 (proton donor/acceptor) is an active-site residue. Position 150 (His150) interacts with (S)-2,3,4,5-tetrahydrodipicolinate. The active-site Proton donor is Lys153. Residue 159 to 160 (GT) participates in (S)-2,3,4,5-tetrahydrodipicolinate binding.

This sequence belongs to the DapB family.

The protein resides in the cytoplasm. The catalysed reaction is (S)-2,3,4,5-tetrahydrodipicolinate + NAD(+) + H2O = (2S,4S)-4-hydroxy-2,3,4,5-tetrahydrodipicolinate + NADH + H(+). The enzyme catalyses (S)-2,3,4,5-tetrahydrodipicolinate + NADP(+) + H2O = (2S,4S)-4-hydroxy-2,3,4,5-tetrahydrodipicolinate + NADPH + H(+). It functions in the pathway amino-acid biosynthesis; L-lysine biosynthesis via DAP pathway; (S)-tetrahydrodipicolinate from L-aspartate: step 4/4. Functionally, catalyzes the conversion of 4-hydroxy-tetrahydrodipicolinate (HTPA) to tetrahydrodipicolinate. The chain is 4-hydroxy-tetrahydrodipicolinate reductase from Thermomicrobium roseum (strain ATCC 27502 / DSM 5159 / P-2).